The following is a 107-amino-acid chain: ATP-dependent Clp protease adapter protein ClpS (107 aa).

The protein belongs to the ClpS family. In terms of assembly, binds to the N-terminal domain of the chaperone ClpA.

Its function is as follows. Involved in the modulation of the specificity of the ClpAP-mediated ATP-dependent protein degradation. The chain is ATP-dependent Clp protease adapter protein ClpS from Acinetobacter baylyi (strain ATCC 33305 / BD413 / ADP1).